The sequence spans 215 residues: Pyridoxine/pyridoxamine 5'-phosphate oxidase (215 aa).

Substrate is bound by residues 9–12 and Lys-69; that span reads RRDY. Residues 64-69, 79-80, Lys-86, and Gln-108 each bind FMN; these read RVLLLK and FT. The substrate site is built by Tyr-126, Arg-130, and Ser-134. Residues 143–144 and Trp-188 contribute to the FMN site; that span reads QS. 194 to 196 is a binding site for substrate; sequence RLH. Arg-198 lines the FMN pocket.

This sequence belongs to the pyridoxamine 5'-phosphate oxidase family. Homodimer. The cofactor is FMN.

It catalyses the reaction pyridoxamine 5'-phosphate + O2 + H2O = pyridoxal 5'-phosphate + H2O2 + NH4(+). It carries out the reaction pyridoxine 5'-phosphate + O2 = pyridoxal 5'-phosphate + H2O2. It functions in the pathway cofactor metabolism; pyridoxal 5'-phosphate salvage; pyridoxal 5'-phosphate from pyridoxamine 5'-phosphate: step 1/1. Its pathway is cofactor metabolism; pyridoxal 5'-phosphate salvage; pyridoxal 5'-phosphate from pyridoxine 5'-phosphate: step 1/1. Catalyzes the oxidation of either pyridoxine 5'-phosphate (PNP) or pyridoxamine 5'-phosphate (PMP) into pyridoxal 5'-phosphate (PLP). The sequence is that of Pyridoxine/pyridoxamine 5'-phosphate oxidase from Pseudomonas savastanoi pv. phaseolicola (strain 1448A / Race 6) (Pseudomonas syringae pv. phaseolicola (strain 1448A / Race 6)).